A 327-amino-acid polypeptide reads, in one-letter code: Probable cell division protein WhiA (327 aa).

Residues 275–308 constitute a DNA-binding region (H-T-H motif); the sequence is SLEELGRLADPQMTKDAVAGRIRRLLTTADKRAR.

The protein belongs to the WhiA family.

Functionally, involved in cell division and chromosome segregation. The chain is Probable cell division protein WhiA from Corynebacterium efficiens (strain DSM 44549 / YS-314 / AJ 12310 / JCM 11189 / NBRC 100395).